The sequence spans 211 residues: Glycerol-3-phosphate acyltransferase (211 aa).

5 helical membrane-spanning segments follow: residues 10–30, 63–83, 90–110, 126–146, and 152–172; these read FTTW…FGLL, ALTL…IKFL, NIFI…PVWL, LGLY…LFLI, and LSAL…YPYL.

This sequence belongs to the PlsY family. As to quaternary structure, probably interacts with PlsX.

The protein localises to the cell inner membrane. The enzyme catalyses an acyl phosphate + sn-glycerol 3-phosphate = a 1-acyl-sn-glycero-3-phosphate + phosphate. It participates in lipid metabolism; phospholipid metabolism. Functionally, catalyzes the transfer of an acyl group from acyl-phosphate (acyl-PO(4)) to glycerol-3-phosphate (G3P) to form lysophosphatidic acid (LPA). This enzyme utilizes acyl-phosphate as fatty acyl donor, but not acyl-CoA or acyl-ACP. This Bartonella henselae (strain ATCC 49882 / DSM 28221 / CCUG 30454 / Houston 1) (Rochalimaea henselae) protein is Glycerol-3-phosphate acyltransferase.